Reading from the N-terminus, the 727-residue chain is DNA topoisomerase 3 (727 aa).

One can recognise a Toprim domain in the interval Lys3–Thr136. Residues Glu9 and Asp105 each contribute to the Mg(2+) site. Residues Phe153–Ile592 enclose the Topo IA-type catalytic domain. Positions Ser187 to Gln192 are interaction with DNA. The O-(5'-phospho-DNA)-tyrosine intermediate role is filled by Tyr310. Positions Arg685–Pro711 are enriched in basic and acidic residues. The disordered stretch occupies residues Arg685–Asn713.

It belongs to the type IA topoisomerase family. It depends on Mg(2+) as a cofactor.

It catalyses the reaction ATP-independent breakage of single-stranded DNA, followed by passage and rejoining.. In terms of biological role, releases the supercoiling and torsional tension of DNA, which is introduced during the DNA replication and transcription, by transiently cleaving and rejoining one strand of the DNA duplex. Introduces a single-strand break via transesterification at a target site in duplex DNA. The scissile phosphodiester is attacked by the catalytic tyrosine of the enzyme, resulting in the formation of a DNA-(5'-phosphotyrosyl)-enzyme intermediate and the expulsion of a 3'-OH DNA strand. The free DNA strand then undergoes passage around the unbroken strand, thus removing DNA supercoils. Finally, in the religation step, the DNA 3'-OH attacks the covalent intermediate to expel the active-site tyrosine and restore the DNA phosphodiester backbone. In Bacillus licheniformis (strain ATCC 14580 / DSM 13 / JCM 2505 / CCUG 7422 / NBRC 12200 / NCIMB 9375 / NCTC 10341 / NRRL NRS-1264 / Gibson 46), this protein is DNA topoisomerase 3.